The sequence spans 95 residues: Scytovirin (95 aa).

The interval 3–41 (GPTYCWNEANNPGGPNRCSNNKQCDGARTCSSSGFCQGT) is SD1. Intrachain disulfides connect Cys7/Cys55, Cys20/Cys32, Cys26/Cys38, Cys68/Cys80, and Cys74/Cys86. The SD2 stretch occupies residues 51-89 (GPTYCWDEAKNPGGPNRCSNSKQCDGARTCSSSGFCQGT).

Has strong anti-HIV activity against T-tropic strains of HIV-1 and weaker activity against M-tropic strains of HIV-1. Inhibits HIV-1 fusion and infection of CD4 LTR beta-gal cells in vitro. Inhibits fusion of HIV infected CEM-SS cells with uninfected CEM-SS cells, and fusion of HIV-1 Env expressing HL2/3 cells with CD4 LTR beta-gal cells. Binds to HIV gp120, HIV gp160 and to a lesser extent HIV gp41. Binding to HIV gp120 is glycosylation dependent. Binds with high specificity to the tetrasaccharide Man-alpha-1,2-Man-alpha-1,6-Man-alpha-1,6-Man and also binds the higher-order oligosaccharides oligomannose 8 and oligomannose 9. Does not bind to monosaccharides, complex or hybrid N-linked oligosaccharides or chitin. The sequence is that of Scytovirin from Scytonema varium.